The chain runs to 404 residues: Cysteine desulfurase IscS (404 aa).

Pyridoxal 5'-phosphate-binding positions include A75 to T76, N155, Q183, and S203 to H205. Position 206 is an N6-(pyridoxal phosphate)lysine (K206). T243 is a binding site for pyridoxal 5'-phosphate. The Cysteine persulfide intermediate role is filled by C328. Residue C328 coordinates [2Fe-2S] cluster.

The protein belongs to the class-V pyridoxal-phosphate-dependent aminotransferase family. NifS/IscS subfamily. In terms of assembly, homodimer. Forms a heterotetramer with IscU, interacts with other sulfur acceptors. The cofactor is pyridoxal 5'-phosphate.

It localises to the cytoplasm. The catalysed reaction is (sulfur carrier)-H + L-cysteine = (sulfur carrier)-SH + L-alanine. It participates in cofactor biosynthesis; iron-sulfur cluster biosynthesis. Master enzyme that delivers sulfur to a number of partners involved in Fe-S cluster assembly, tRNA modification or cofactor biosynthesis. Catalyzes the removal of elemental sulfur atoms from cysteine to produce alanine. Functions as a sulfur delivery protein for Fe-S cluster synthesis onto IscU, an Fe-S scaffold assembly protein, as well as other S acceptor proteins. This chain is Cysteine desulfurase IscS, found in Vibrio vulnificus (strain YJ016).